Here is a 435-residue protein sequence, read N- to C-terminus: Type A flavoprotein fprA (435 aa).

Positions 48-228 (ANGTTYNAYA…PFRSFVAQAL (181 aa)) are zinc metallo-hydrolase. Fe cation-binding residues include H98, E100, D102, H167, D186, and H243. The region spanning 276-415 (LLIFYVSAYG…EGRAFGRRLA (140 aa)) is the Flavodoxin-like domain.

The protein in the N-terminal section; belongs to the zinc metallo-hydrolase group 3 family. Homodimer. It depends on FMN as a cofactor. Fe cation is required as a cofactor.

Low-potential electron donor to a number of redox enzymes. This Rhodobacter capsulatus (strain ATCC BAA-309 / NBRC 16581 / SB1003) protein is Type A flavoprotein fprA (fprA).